The primary structure comprises 407 residues: Negative RAS protein regulator protein (407 aa).

Disordered regions lie at residues 51–94, 165–187, and 241–273; these read PRII…ARQI, HPSKKSKQKKKKSKQEAGSNLNF, and NNNNNNINNSNNSNNNNSNNINRNSNHSTNVFS. A compositionally biased stretch (low complexity) spans 55–73; the sequence is SSSNSNSNSNSNSNSNSNS. The Myb-like domain maps to 90 to 158; it reads SARQIRKKWK…QCHDRFKVLY (69 aa). The span at 165-177 shows a compositional bias: basic residues; that stretch reads HPSKKSKQKKKKS. Residues 241–270 are compositionally biased toward low complexity; sequence NNNNNNINNSNNSNNNNSNNINRNSNHSTN.

It localises to the nucleus. In terms of biological role, negative regulator of the Ras-cyclic AMP pathway. Negatively regulate the activity of normal but not mutationally activated Ras proteins. The down-regulatory effect of RPI1 requires the presence of one of the two Ras GTPase activators, IRA1 and IRA2. This chain is Negative RAS protein regulator protein (RPI1), found in Saccharomyces cerevisiae (strain ATCC 204508 / S288c) (Baker's yeast).